Reading from the N-terminus, the 29-residue chain is Cytochrome b6-f complex subunit 8 (29 aa).

The chain crosses the membrane as a helical span at residues 3–23 (IVSLAWAALMIVFTFSLSLVV).

This sequence belongs to the PetN family. The 4 large subunits of the cytochrome b6-f complex are cytochrome b6, subunit IV (17 kDa polypeptide, PetD), cytochrome f and the Rieske protein, while the 4 small subunits are PetG, PetL, PetM and PetN. The complex functions as a dimer.

It localises to the plastid membrane. Functionally, component of the cytochrome b6-f complex, which mediates electron transfer between photosystem II (PSII) and photosystem I (PSI), cyclic electron flow around PSI, and state transitions. The chain is Cytochrome b6-f complex subunit 8 from Cuscuta exaltata (Tall dodder).